The chain runs to 410 residues: Mitochondrial potassium channel (410 aa).

A mitochondrion-targeting transit peptide spans 1-35 (MTGCSPVFTMQQVVGVSHRLVWRTFRGTDLLMTRT). Topologically, residues 36–201 (LCSPGPSRPG…KERTRAERTK (166 aa)) are mitochondrial matrix. The stretch at 116–143 (VREAREDLEAQQTKLKEVRDRLDRVSRE) forms a coiled coil. The chain crosses the membrane as a helical span at residues 202 to 222 (NWSLIGSVLGALIGVAGSTYV). The Mitochondrial intermembrane portion of the chain corresponds to 223–385 (NRVRLQELKA…RLEAQANRNA (163 aa)). The interval 276-296 (GQDQGSGSPTGPSSPRGKDID) is disordered. A compositionally biased stretch (low complexity) spans 280-290 (GSGSPTGPSSP). A helical transmembrane segment spans residues 386-406 (ISSTLVTCVTFMATLPLLYML). At 407 to 410 (FKTS) the chain is on the mitochondrial matrix side.

As to quaternary structure, the mitochondrial potassium channel (mitoK(ATP)) forms a heteromultimer.

Its subcellular location is the mitochondrion inner membrane. The catalysed reaction is K(+)(in) = K(+)(out). Channel activity inhibited by ATP via ABCB8/MITOSUR subunit. Pore-forming subunit of the mitochondrial ATP-gated potassium channel (mitoK(ATP)). Together with ATP-binding subunit ABCB8/MITOSUR of the mitoK(ATP) channel, mediates ATP-dependent K(+) currents across the mitochondrial inner membrane. An increase in ATP intracellular levels closes the channel, inhibiting K(+) transport, whereas a decrease in ATP levels enhances K(+) uptake in the mitochondrial matrix. May contribute to the homeostatic control of cellular metabolism under stress conditions by regulating the mitochondrial matrix volume. This Rattus norvegicus (Rat) protein is Mitochondrial potassium channel.